A 341-amino-acid polypeptide reads, in one-letter code: S-adenosylmethionine:tRNA ribosyltransferase-isomerase (341 aa).

This sequence belongs to the QueA family. In terms of assembly, monomer.

It localises to the cytoplasm. The enzyme catalyses 7-aminomethyl-7-carbaguanosine(34) in tRNA + S-adenosyl-L-methionine = epoxyqueuosine(34) in tRNA + adenine + L-methionine + 2 H(+). The protein operates within tRNA modification; tRNA-queuosine biosynthesis. Transfers and isomerizes the ribose moiety from AdoMet to the 7-aminomethyl group of 7-deazaguanine (preQ1-tRNA) to give epoxyqueuosine (oQ-tRNA). This chain is S-adenosylmethionine:tRNA ribosyltransferase-isomerase, found in Staphylococcus epidermidis (strain ATCC 35984 / DSM 28319 / BCRC 17069 / CCUG 31568 / BM 3577 / RP62A).